A 143-amino-acid chain; its full sequence is Transcriptional regulator MraZ (143 aa).

2 SpoVT-AbrB domains span residues 5 to 47 (EYEH…TLEE) and 76 to 119 (AVEV…DRET).

Belongs to the MraZ family. In terms of assembly, forms oligomers.

It is found in the cytoplasm. The protein resides in the nucleoid. The sequence is that of Transcriptional regulator MraZ from Staphylococcus saprophyticus subsp. saprophyticus (strain ATCC 15305 / DSM 20229 / NCIMB 8711 / NCTC 7292 / S-41).